The following is a 70-amino-acid chain: DNA-binding transcriptional activator AlpA (70 aa).

A DNA-binding region (H-T-H motif) is located at residues 12 to 31 (LPAVIQKTGMARATIYDWLN).

Its function is as follows. Positive regulator of the expression of the slpA gene. When overexpressed, leads to suppression of the capsule overproduction and UV sensitivity phenotypes of cells mutant for the Lon ATP-dependent protease. Part of the cryptic P4-like prophage CP4-57. Overexpression of AlpA leads to excision of the CP4-57 prophage by IntA. This inactivates ssrA (the gene upstream of the prophage) that encodes tmRNA which is required to rescue stalled ribosomes in a process known as trans-translation. This is DNA-binding transcriptional activator AlpA from Escherichia coli (strain K12).